The primary structure comprises 85 residues: Arminin 6494 (85 aa).

A signal peptide spans 1 to 18 (MKTVFAILFLAFIALTYA). The propeptide occupies 19-57 (RSYEDVKEEIKNEVEKEILEDLEEESDELNDKRKEINDA). An Alanine amide modification is found at alanine 82.

Belongs to the arminin family. As to expression, expressed in entodermal epithelium along the body column.

The protein resides in the secreted. It is found in the target cell membrane. Functionally, antimicrobial peptide with a broad-spectrum antimicrobial activity. Keeps its antibacterial activity under a wide range of salt concentrations that mimic physiological conditions of human blood, which is surprising, since Hydra is an obligate freshwater animal with nearly no salt tolerance. Does not affect red blood cells. The chain is Arminin 6494 from Hydra vulgaris (Hydra).